Consider the following 159-residue polypeptide: Probable cyclic pyranopterin monophosphate synthase (159 aa).

Substrate is bound by residues 75 to 77 and 111 to 112; these read LCH and ME. Asp126 is an active-site residue.

Belongs to the MoaC family. Homohexamer; trimer of dimers.

It carries out the reaction (8S)-3',8-cyclo-7,8-dihydroguanosine 5'-triphosphate = cyclic pyranopterin phosphate + diphosphate. Its pathway is cofactor biosynthesis; molybdopterin biosynthesis. In terms of biological role, catalyzes the conversion of (8S)-3',8-cyclo-7,8-dihydroguanosine 5'-triphosphate to cyclic pyranopterin monophosphate (cPMP). This Pyrococcus horikoshii (strain ATCC 700860 / DSM 12428 / JCM 9974 / NBRC 100139 / OT-3) protein is Probable cyclic pyranopterin monophosphate synthase.